A 159-amino-acid polypeptide reads, in one-letter code: SsrA-binding protein (159 aa).

The tract at residues 137–159 (KRQTEKERDWEREKQRLFQRDQR) is disordered.

This sequence belongs to the SmpB family.

The protein resides in the cytoplasm. Functionally, required for rescue of stalled ribosomes mediated by trans-translation. Binds to transfer-messenger RNA (tmRNA), required for stable association of tmRNA with ribosomes. tmRNA and SmpB together mimic tRNA shape, replacing the anticodon stem-loop with SmpB. tmRNA is encoded by the ssrA gene; the 2 termini fold to resemble tRNA(Ala) and it encodes a 'tag peptide', a short internal open reading frame. During trans-translation Ala-aminoacylated tmRNA acts like a tRNA, entering the A-site of stalled ribosomes, displacing the stalled mRNA. The ribosome then switches to translate the ORF on the tmRNA; the nascent peptide is terminated with the 'tag peptide' encoded by the tmRNA and targeted for degradation. The ribosome is freed to recommence translation, which seems to be the essential function of trans-translation. The chain is SsrA-binding protein from Cellvibrio japonicus (strain Ueda107) (Pseudomonas fluorescens subsp. cellulosa).